The sequence spans 258 residues: Acyl-[acyl-carrier-protein]--UDP-N-acetylglucosamine O-acyltransferase (258 aa).

Belongs to the transferase hexapeptide repeat family. LpxA subfamily. As to quaternary structure, homotrimer.

It is found in the cytoplasm. It carries out the reaction a (3R)-hydroxyacyl-[ACP] + UDP-N-acetyl-alpha-D-glucosamine = a UDP-3-O-[(3R)-3-hydroxyacyl]-N-acetyl-alpha-D-glucosamine + holo-[ACP]. The protein operates within glycolipid biosynthesis; lipid IV(A) biosynthesis; lipid IV(A) from (3R)-3-hydroxytetradecanoyl-[acyl-carrier-protein] and UDP-N-acetyl-alpha-D-glucosamine: step 1/6. Functionally, involved in the biosynthesis of lipid A, a phosphorylated glycolipid that anchors the lipopolysaccharide to the outer membrane of the cell. The sequence is that of Acyl-[acyl-carrier-protein]--UDP-N-acetylglucosamine O-acyltransferase from Ectopseudomonas mendocina (strain ymp) (Pseudomonas mendocina).